Reading from the N-terminus, the 582-residue chain is Type I secretion system ATP-binding protein PrsD (582 aa).

Helical transmembrane passes span 22-42 (FIGV…GSFF), 59-79 (LIAL…FELI), and 148-168 (IAIC…GGLI). In terms of domain architecture, ABC transmembrane type-1 spans 22-301 (FIGVGVASAL…AIGNWRGLVA (280 aa)). Residues 332–568 (LTVEGLASGP…VLRPQQVERQ (237 aa)) form the ABC transporter domain. 366-373 (GPSASGKS) contributes to the ATP binding site.

The protein belongs to the ABC transporter superfamily. As to quaternary structure, part of a type I secretion system composed of PrsD and PrsE.

The protein resides in the cell inner membrane. Mediates secretion of glycanase ExsH. This Rhizobium meliloti (strain 1021) (Ensifer meliloti) protein is Type I secretion system ATP-binding protein PrsD (prsD).